Here is a 398-residue protein sequence, read N- to C-terminus: Ethanolaminephosphotransferase 1 (398 aa).

Residue alanine 2 is modified to N-acetylalanine. A run of 10 helical transmembrane segments spans residues 47-69 (WLAP…LLLT), 84-103 (HVPD…AYTL), 123-145 (LFDH…SIFG), 150-172 (GVSV…LSHW), 179-201 (VLFL…IVTA), 221-243 (LFTA…LNFF), 256-278 (VYEA…VWIL), 291-310 (IFYF…LIVC), 319-341 (TLNW…AATS), and 345-367 (SALL…VQVV). A non-standard amino acid (selenocysteine) is located at residue selenocysteine 388.

This sequence belongs to the CDP-alcohol phosphatidyltransferase class-I family. Mg(2+) serves as cofactor. The cofactor is Mn(2+).

It is found in the endoplasmic reticulum membrane. It carries out the reaction CDP-ethanolamine + a 1,2-diacyl-sn-glycerol = a 1,2-diacyl-sn-glycero-3-phosphoethanolamine + CMP + H(+). It catalyses the reaction 1-O-alkyl-2-acyl-sn-glycerol + CDP-ethanolamine = a 1-O-alkyl-2-acyl-sn-glycero-3-phosphoethanolamine + CMP + H(+). The protein operates within phospholipid metabolism; phosphatidylethanolamine biosynthesis; phosphatidylethanolamine from ethanolamine: step 3/3. In terms of biological role, ethanolaminephosphotransferase that catalyzes the transfer of phosphoethanolamine (PE) from CDP-ethanolamine to lipid acceptors, the final step in the synthesis of PE via the 'Kennedy' pathway. PE is the second most abundant phospholipid of membranes in mammals and is involved in various membrane-related cellular processes. The enzyme is critical for the synthesis of several PE species and also catalyzes the synthesis of plasmanyl-PE, a lipid required for proper myelination and neurodevelopment, from 1-alkyl-2-acylglycerol. The polypeptide is Ethanolaminephosphotransferase 1 (Mus musculus (Mouse)).